Here is a 93-residue protein sequence, read N- to C-terminus: Pyrimidine/purine nucleoside phosphorylase (93 aa).

Belongs to the nucleoside phosphorylase PpnP family.

The catalysed reaction is a purine D-ribonucleoside + phosphate = a purine nucleobase + alpha-D-ribose 1-phosphate. It carries out the reaction adenosine + phosphate = alpha-D-ribose 1-phosphate + adenine. The enzyme catalyses cytidine + phosphate = cytosine + alpha-D-ribose 1-phosphate. It catalyses the reaction guanosine + phosphate = alpha-D-ribose 1-phosphate + guanine. The catalysed reaction is inosine + phosphate = alpha-D-ribose 1-phosphate + hypoxanthine. It carries out the reaction thymidine + phosphate = 2-deoxy-alpha-D-ribose 1-phosphate + thymine. The enzyme catalyses uridine + phosphate = alpha-D-ribose 1-phosphate + uracil. It catalyses the reaction xanthosine + phosphate = alpha-D-ribose 1-phosphate + xanthine. Catalyzes the phosphorolysis of diverse nucleosides, yielding D-ribose 1-phosphate and the respective free bases. Can use uridine, adenosine, guanosine, cytidine, thymidine, inosine and xanthosine as substrates. Also catalyzes the reverse reactions. This Pseudomonas paraeruginosa (strain DSM 24068 / PA7) (Pseudomonas aeruginosa (strain PA7)) protein is Pyrimidine/purine nucleoside phosphorylase.